Reading from the N-terminus, the 252-residue chain is Imidazole glycerol phosphate synthase subunit HisF (252 aa).

Active-site residues include Asp11 and Asp130.

Belongs to the HisA/HisF family. As to quaternary structure, heterodimer of HisH and HisF.

It localises to the cytoplasm. The catalysed reaction is 5-[(5-phospho-1-deoxy-D-ribulos-1-ylimino)methylamino]-1-(5-phospho-beta-D-ribosyl)imidazole-4-carboxamide + L-glutamine = D-erythro-1-(imidazol-4-yl)glycerol 3-phosphate + 5-amino-1-(5-phospho-beta-D-ribosyl)imidazole-4-carboxamide + L-glutamate + H(+). It functions in the pathway amino-acid biosynthesis; L-histidine biosynthesis; L-histidine from 5-phospho-alpha-D-ribose 1-diphosphate: step 5/9. Its function is as follows. IGPS catalyzes the conversion of PRFAR and glutamine to IGP, AICAR and glutamate. The HisF subunit catalyzes the cyclization activity that produces IGP and AICAR from PRFAR using the ammonia provided by the HisH subunit. This chain is Imidazole glycerol phosphate synthase subunit HisF, found in Lactiplantibacillus plantarum (strain ATCC BAA-793 / NCIMB 8826 / WCFS1) (Lactobacillus plantarum).